Reading from the N-terminus, the 65-residue chain is Large ribosomal subunit protein bL35 (65 aa).

This sequence belongs to the bacterial ribosomal protein bL35 family.

This Aromatoleum aromaticum (strain DSM 19018 / LMG 30748 / EbN1) (Azoarcus sp. (strain EbN1)) protein is Large ribosomal subunit protein bL35.